A 615-amino-acid chain; its full sequence is uncharacterized protein (615 aa).

Composition is skewed to polar residues over residues 1–11 (MSETSSNSPAS), 41–55 (LSQN…SSKV), and 128–140 (TSGS…NAPP). 2 disordered regions span residues 1–61 (MSET…QALV) and 97–149 (HQNH…KASS). Phosphoserine is present on residues Ser149 and Ser152. A disordered region spans residues 181–217 (LIHPEQTDRGLPYAPDEKFHNSGSLKLPKGASLEDLS). Phosphoserine is present on residues Ser219 and Ser275. Disordered stretches follow at residues 266-481 (KPLA…KFTG), 493-565 (RLQK…KPSF), and 586-615 (GVET…TEEQ). Over residues 272–283 (RQRSTADLTESD) the composition is skewed to polar residues. Residues Thr276 and Thr297 each carry the phosphothreonine modification. Basic and acidic residues predominate over residues 312–323 (EAEKGFYTKDGE). Residues 356 to 376 (PSLSSASQPSAASSSSSSEPS) are compositionally biased toward low complexity. A compositionally biased stretch (polar residues) spans 505–522 (PNKSKSPSGTKSPASGET). Thr514 is modified (phosphothreonine). Phosphoserine is present on Ser516. Over residues 586-599 (GVETRKEVEPKEEA) the composition is skewed to basic and acidic residues. Acidic residues predominate over residues 600–615 (VIPEEDVEVEVETEEQ).

This is an uncharacterized protein from Schizosaccharomyces pombe (strain 972 / ATCC 24843) (Fission yeast).